The following is a 221-amino-acid chain: Peptide methionine sulfoxide reductase MsrA (221 aa).

Cysteine 54 is an active-site residue.

Belongs to the MsrA Met sulfoxide reductase family.

It catalyses the reaction L-methionyl-[protein] + [thioredoxin]-disulfide + H2O = L-methionyl-(S)-S-oxide-[protein] + [thioredoxin]-dithiol. The enzyme catalyses [thioredoxin]-disulfide + L-methionine + H2O = L-methionine (S)-S-oxide + [thioredoxin]-dithiol. Functionally, has an important function as a repair enzyme for proteins that have been inactivated by oxidation. Catalyzes the reversible oxidation-reduction of methionine sulfoxide in proteins to methionine. The protein is Peptide methionine sulfoxide reductase MsrA of Methylobacterium nodulans (strain LMG 21967 / CNCM I-2342 / ORS 2060).